The following is a 217-amino-acid chain: Cytidylate kinase (217 aa).

Residue 11 to 19 participates in ATP binding; it reads GPAGAGKST.

The protein belongs to the cytidylate kinase family. Type 1 subfamily.

It is found in the cytoplasm. It catalyses the reaction CMP + ATP = CDP + ADP. It carries out the reaction dCMP + ATP = dCDP + ADP. The protein is Cytidylate kinase of Clostridium perfringens (strain ATCC 13124 / DSM 756 / JCM 1290 / NCIMB 6125 / NCTC 8237 / Type A).